Here is a 110-residue protein sequence, read N- to C-terminus: Large ribosomal subunit protein uL22 (110 aa).

This sequence belongs to the universal ribosomal protein uL22 family. Part of the 50S ribosomal subunit.

Its function is as follows. This protein binds specifically to 23S rRNA; its binding is stimulated by other ribosomal proteins, e.g. L4, L17, and L20. It is important during the early stages of 50S assembly. It makes multiple contacts with different domains of the 23S rRNA in the assembled 50S subunit and ribosome. Functionally, the globular domain of the protein is located near the polypeptide exit tunnel on the outside of the subunit, while an extended beta-hairpin is found that lines the wall of the exit tunnel in the center of the 70S ribosome. The chain is Large ribosomal subunit protein uL22 from Vesicomyosocius okutanii subsp. Calyptogena okutanii (strain HA).